The following is a 278-amino-acid chain: Toxin coregulated pilus biosynthesis protein D (278 aa).

Residues 30-50 (LLVAIIFLVLSILGGGAYLYY) traverse the membrane as a helical segment.

It localises to the cell membrane. Involved in TCP pilus biogenesis. The protein is Toxin coregulated pilus biosynthesis protein D (tcpD) of Vibrio cholerae serotype O1 (strain ATCC 39315 / El Tor Inaba N16961).